The sequence spans 100 residues: Urease subunit gamma (100 aa).

Belongs to the urease gamma subunit family. In terms of assembly, heterotrimer of UreA (gamma), UreB (beta) and UreC (alpha) subunits. Three heterotrimers associate to form the active enzyme.

It is found in the cytoplasm. It catalyses the reaction urea + 2 H2O + H(+) = hydrogencarbonate + 2 NH4(+). It participates in nitrogen metabolism; urea degradation; CO(2) and NH(3) from urea (urease route): step 1/1. This Burkholderia ambifaria (strain MC40-6) protein is Urease subunit gamma.